A 715-amino-acid chain; its full sequence is Coiled-coil domain-containing protein 170 (715 aa).

3 coiled-coil regions span residues 30–286, 360–418, and 478–656; these read VTRE…AGQQ, ESRD…LVSG, and ENKT…FREV. Residues 355–591 form a required for binding to microtubules and Golgi apparatus location region; it reads MDSREESRDR…DLNKSRDQLE (237 aa).

Binds Golgi-associated microtubules.

The protein localises to the golgi apparatus. Functionally, plays a role in Golgi-associated microtubules organization and stabilization. The polypeptide is Coiled-coil domain-containing protein 170 (Homo sapiens (Human)).